We begin with the raw amino-acid sequence, 311 residues long: Heparan sulfate glucosamine 3-O-sulfotransferase 1 (311 aa).

A signal peptide spans 1-20; the sequence is MTLLLLGAVLLVAQPQLVPS. N52 carries N-linked (GlcNAc...) asparagine glycosylation. 3'-phosphoadenylyl sulfate is bound by residues 68–72, R151, and S159; that span reads KGGTR. N-linked (GlcNAc...) asparagine glycosylation is found at N196, N246, and N253. Residue Y259 coordinates 3'-phosphoadenylyl sulfate. A disulfide bridge connects residues C260 and C269. A 3'-phosphoadenylyl sulfate-binding site is contributed by 274–278; the sequence is KGRAH.

Belongs to the sulfotransferase 1 family.

It localises to the golgi apparatus lumen. It carries out the reaction alpha-D-glucosaminyl-[heparan sulfate](n) + 3'-phosphoadenylyl sulfate = 3-sulfo-alpha-D-glucosaminyl-[heparan sulfate](n) + adenosine 3',5'-bisphosphate + H(+). In terms of biological role, sulfotransferase that utilizes 3'-phospho-5'-adenylyl sulfate (PAPS) to catalyze the transfer of a sulfo group to position 3 of glucosamine residues in heparan. Catalyzes the rate limiting step in the biosynthesis of heparan sulfate (HSact). This modification is a crucial step in the biosynthesis of anticoagulant heparan sulfate as it completes the structure of the antithrombin pentasaccharide binding site. This is Heparan sulfate glucosamine 3-O-sulfotransferase 1 (Hs3st1) from Rattus norvegicus (Rat).